A 1192-amino-acid chain; its full sequence is Probable phospholipid-transporting ATPase IM (1192 aa).

Over 1 to 44 (MFCSEKKLREVERIVKANDREYNEKFQYADNRIHTSKYNILTFL) the chain is Cytoplasmic. A helical membrane pass occupies residues 45–66 (PINLFEQFQRVANAYFLCLLIL). At 67 to 72 (QLIPEI) the chain is on the exoplasmic loop side. Residues 73–92 (SSLTWFTTIVPLVLVITMTA) form a helical membrane-spanning segment. Topologically, residues 93 to 276 (VKDATDDYFR…TSIDRLMNTL (184 aa)) are cytoplasmic. Residues 277 to 298 (VLWIFGFLICLGIILAIGNSIW) form a helical membrane-spanning segment. Residues 299–327 (ESQTGDQFRTFLFWNEGEKSSVFSGFLTF) lie on the Exoplasmic loop side of the membrane. A helical membrane pass occupies residues 328–349 (WSYIIILNTVVPISLYVSVEVI). Over 350-871 (RLGHSYFINW…GRWSYFRMCK (522 aa)) the chain is Cytoplasmic. Asp392 serves as the catalytic 4-aspartylphosphate intermediate. 12 residues coordinate ATP: Asp392, Lys393, Thr394, Glu496, Phe537, Lys560, Arg594, Thr674, Gly675, Asp676, Arg789, and Lys795. Asp392 lines the Mg(2+) pocket. Position 394 (Thr394) interacts with Mg(2+). Asp815 serves as a coordination point for Mg(2+). Residues Asn818 and Asp819 each coordinate ATP. Asp819 contacts Mg(2+). The chain crosses the membrane as a helical span at residues 872 to 892 (FLCYFFYKNFAFTLVHFWFGF). Residues 893 to 904 (FCGFSAQTVYDQ) are Exoplasmic loop-facing. The helical transmembrane segment at 905 to 924 (WFITLFNIVYTSLPVLAMGI) threads the bilayer. The Cytoplasmic portion of the chain corresponds to 925 to 954 (FDQDVSDQNSVDCPQLYKPGQLNLLFNKRK). The chain crosses the membrane as a helical span at residues 955-976 (FFICVLHGIYTSLVLFFIPYGA). The Exoplasmic loop segment spans residues 977-990 (FYNVAGEDGQHIAD). A helical membrane pass occupies residues 991-1013 (YQSFAVTMATSLVIVVSVQIALD). Over 1014–1019 (TSYWTF) the chain is Cytoplasmic. Residues 1020–1040 (INHVFIWGSIAIYFSILFTMH) form a helical membrane-spanning segment. The Exoplasmic loop portion of the chain corresponds to 1041–1060 (SNGIFGIFPNQFPFVGNARH). Residues 1061 to 1085 (SLTQKCIWLVILLTTVASVMPVVAF) traverse the membrane as a helical segment. The Cytoplasmic segment spans residues 1086–1192 (RFLKVDLYPT…SFSQDKTVKL (107 aa)). Basic residues predominate over residues 1104–1125 (QKAQKKARPPSSRRPRTRRSSS). Disordered regions lie at residues 1104 to 1130 (QKAQKKARPPSSRRPRTRRSSSRRSGY) and 1143 to 1163 (TSGKNMRAKNPPPTSGLEKTH).

This sequence belongs to the cation transport ATPase (P-type) (TC 3.A.3) family. Type IV subfamily. As to quaternary structure, component of a P4-ATPase flippase complex which consists of a catalytic alpha subunit and an accessory beta subunit. Interacts with beta subunits TMEM30A and TMEM30B. Mg(2+) is required as a cofactor. Ubiquitously expressed at moderate levels.

Its subcellular location is the cell membrane. It localises to the golgi apparatus. The catalysed reaction is ATP + H2O + phospholipidSide 1 = ADP + phosphate + phospholipidSide 2.. Component of a P4-ATPase flippase complex which catalyzes the hydrolysis of ATP coupled to the transport of aminophospholipids from the outer to the inner leaflet of various membranes and ensures the maintenance of asymmetric distribution of phospholipids. Phospholipid translocation also seems to be implicated in vesicle formation and in uptake of lipid signaling molecules. This is Probable phospholipid-transporting ATPase IM (ATP8B4) from Homo sapiens (Human).